Reading from the N-terminus, the 91-residue chain is Sec-independent protein translocase protein TatA (91 aa).

The helical transmembrane segment at 1–21 (MGSMSVWHWVIVAVVVMLLFG) threads the bilayer. A disordered region spans residues 42 to 91 (GMADDETQPTNTTSVPPVGPNDPVRTLPHQGAPGTAPQQTHVPAGDHKAV).

The protein belongs to the TatA/E family. In terms of assembly, the Tat system comprises two distinct complexes: a TatABC complex, containing multiple copies of TatA, TatB and TatC subunits, and a separate TatA complex, containing only TatA subunits. Substrates initially bind to the TatABC complex, which probably triggers association of the separate TatA complex to form the active translocon.

It is found in the cell inner membrane. Part of the twin-arginine translocation (Tat) system that transports large folded proteins containing a characteristic twin-arginine motif in their signal peptide across membranes. TatA could form the protein-conducting channel of the Tat system. This is Sec-independent protein translocase protein TatA from Methylorubrum populi (strain ATCC BAA-705 / NCIMB 13946 / BJ001) (Methylobacterium populi).